Reading from the N-terminus, the 484-residue chain is Sperm motility kinase 2B (484 aa).

Residues 8-256 (YVMLETIGHG…VAEVMVHPWV (249 aa)) enclose the Protein kinase domain. ATP is bound by residues 14–22 (IGHGGCSKV) and Lys37. The Proton acceptor role is filled by Asp127. Positions 272–314 (PLKPNPAIVKAMGYIGFQAQDIEDSLRQRKFNETMASYCLLKK) constitute a UBA domain. 2 stretches are compositionally biased toward polar residues: residues 356 to 373 (PTSL…CGRS) and 422 to 434 (SSDD…TSAS). 2 disordered regions span residues 356–400 (PTSL…TMDH) and 422–450 (SSDD…RGIK).

It belongs to the protein kinase superfamily. CAMK Ser/Thr protein kinase family. Smok subfamily. Testis-specific. Expressed in the testis from 22 days postpartum (22 dpp).

It catalyses the reaction L-seryl-[protein] + ATP = O-phospho-L-seryl-[protein] + ADP + H(+). The catalysed reaction is L-threonyl-[protein] + ATP = O-phospho-L-threonyl-[protein] + ADP + H(+). Functionally, may play a role in sperm motility, especially in the regulation of flagellar function. The polypeptide is Sperm motility kinase 2B (Mus musculus (Mouse)).